The primary structure comprises 116 residues: Iron-sulfur cluster insertion protein ErpA (116 aa).

Cys44, Cys108, and Cys110 together coordinate iron-sulfur cluster.

This sequence belongs to the HesB/IscA family. As to quaternary structure, homodimer. Iron-sulfur cluster serves as cofactor.

Functionally, required for insertion of 4Fe-4S clusters for at least IspG. The protein is Iron-sulfur cluster insertion protein ErpA of Shewanella piezotolerans (strain WP3 / JCM 13877).